A 339-amino-acid polypeptide reads, in one-letter code: DNA-directed RNA polymerase subunit alpha (339 aa).

The tract at residues 1-234 is alpha N-terminal domain (alpha-NTD); it reads MIEKNWQELI…DQFQIFINFE (234 aa). The segment at 251 to 339 is alpha C-terminal domain (alpha-CTD); sequence FNPALLRKVD…DLAKRFEDHV (89 aa).

Belongs to the RNA polymerase alpha chain family. As to quaternary structure, homodimer. The RNAP catalytic core consists of 2 alpha, 1 beta, 1 beta' and 1 omega subunit. When a sigma factor is associated with the core the holoenzyme is formed, which can initiate transcription.

It catalyses the reaction RNA(n) + a ribonucleoside 5'-triphosphate = RNA(n+1) + diphosphate. In terms of biological role, DNA-dependent RNA polymerase catalyzes the transcription of DNA into RNA using the four ribonucleoside triphosphates as substrates. The polypeptide is DNA-directed RNA polymerase subunit alpha (Maricaulis maris (strain MCS10) (Caulobacter maris)).